The primary structure comprises 538 residues: MTDLNKVVKELEALGIYDVKEVVYNPSYEQLFEEETKPGLEGFEKGTLTTTGAVAVDTGIFTGRSPKDKYIVLDEKTKDTVWWTSETAKNDNKPMNQATWQSLKDLVTNQLSRKRLFVVDGFCGASEHDRIAVRIVTEVAWQAHFVKNMFIRPTEEQLKNFEPDFVVMNGSKVTNPNWKEQGLNSENFVAFNLTERIQLIGGTWYGGEMKKGMFSIMNYFLPLKGVGAMHCSANVGKDGDVAIFFGLSGTGKTTLSTDPKRELIGDDEHGWDDVGIFNFEGGCYAKTIHLSEENEPDIYRAIRRDALLENVVVRADGSVDFDDGSKTENTRVSYPIYHIDNIVKPVSRAGHATKVIFLTADAFGVLPPVSKLTPEQTKYYFLSGFTAKLAGTERGITEPTPTFSACFGAAFLTLHPTQYAEVLVKRMQAAGAEAYLVNTGWNGTGKRISIKDTRGIIDAILDGSIEKAEMGELPIFNLAIPKALLGVDSAILDPRDTYADKAQWQSKAEDLAGRFVKNFVKYATNEEGKALIAAGPKA.

Residues Arg-64, Tyr-205, and Lys-211 each contribute to the substrate site. Residues Lys-211, His-230, and 246-254 (GLSGTGKTT) each bind ATP. Residues Lys-211 and His-230 each contribute to the Mn(2+) site. Asp-267 is a Mn(2+) binding site. Residues Glu-295, Arg-331, 447-448 (RI), and Thr-453 contribute to the ATP site. Position 331 (Arg-331) interacts with substrate.

This sequence belongs to the phosphoenolpyruvate carboxykinase (ATP) family. Monomer. Requires Mn(2+) as cofactor.

It is found in the cytoplasm. The catalysed reaction is oxaloacetate + ATP = phosphoenolpyruvate + ADP + CO2. Its pathway is carbohydrate biosynthesis; gluconeogenesis. Its function is as follows. Involved in the gluconeogenesis. Catalyzes the conversion of oxaloacetate (OAA) to phosphoenolpyruvate (PEP) through direct phosphoryl transfer between the nucleoside triphosphate and OAA. The polypeptide is Phosphoenolpyruvate carboxykinase (ATP) (Haemophilus influenzae (strain PittEE)).